Consider the following 341-residue polypeptide: HTH-type transcriptional repressor CytR (341 aa).

One can recognise an HTH lacI-type domain in the interval 10–64 (ATMKDVALKAKVSTATVSRALMNPDKVSQATRNRVEKAAREVGYLPQPMGRNVKR). The H-T-H motif DNA-binding region spans 12-31 (MKDVALKAKVSTATVSRALM).

In terms of biological role, this protein negatively controls the transcription initiation of genes such as deoCABD, udp, and cdd encoding catabolizing enzymes and nupC, nupG, and tsx encoding transporting and pore-forming proteins. Binds cytidine and adenosine as effectors. The chain is HTH-type transcriptional repressor CytR (cytR) from Escherichia coli (strain K12).